We begin with the raw amino-acid sequence, 37 residues long: Large ribosomal subunit protein bL36A (37 aa).

This sequence belongs to the bacterial ribosomal protein bL36 family.

The sequence is that of Large ribosomal subunit protein bL36A from Methylobacillus flagellatus (strain ATCC 51484 / DSM 6875 / VKM B-1610 / KT).